The primary structure comprises 275 residues: Large ribosomal subunit protein uL2 (275 aa).

The segment at 224 to 251 (VMNPVDHPHGGGEGRSPIGRKAPVTPWG) is disordered.

Belongs to the universal ribosomal protein uL2 family. As to quaternary structure, part of the 50S ribosomal subunit. Forms a bridge to the 30S subunit in the 70S ribosome.

Its function is as follows. One of the primary rRNA binding proteins. Required for association of the 30S and 50S subunits to form the 70S ribosome, for tRNA binding and peptide bond formation. It has been suggested to have peptidyltransferase activity; this is somewhat controversial. Makes several contacts with the 16S rRNA in the 70S ribosome. This is Large ribosomal subunit protein uL2 from Heliobacterium modesticaldum (strain ATCC 51547 / Ice1).